We begin with the raw amino-acid sequence, 866 residues long: N-alpha-acetyltransferase 15, NatA auxiliary subunit (866 aa).

4 TPR repeats span residues 46-79 (GETLAMKGLTLNCLGKKEEAYELVRRGLRNDLKS), 80-113 (HVCWHVYGLLQRSDKKYDEAIKCYRNALKWDKDN), 148-184 (RASWIGYAIAYHLLEDYEMAAKILEEFRKTQQTSPDK), and 224-257 (LAVEETKGELLLQLCRLEDAADVYRGLQERNPEN). An N6-acetyllysine modification is found at K262. Position 302 is a phosphoserine (S302). TPR repeat units follow at residues 374 to 407 (LWVQYYLAQHYDKIGQPSIALEYINTAIESTPTL), 409 to 441 (ELFLVKAKIYKHAGNIKEAARWMDEAQALDTAD), and 485 to 518 (MWFQTECAQAYKAMNKFGEALKKCHEIERHFIEI). An interaction with HYPK region spans residues 500–866 (KFGEALKKCH…AEAEELANEI (367 aa)). S537 and S588 each carry phosphoserine. Residues 579 to 594 (EHEADTANMSDKELKK) are compositionally biased toward basic and acidic residues. Residues 579 to 642 (EHEADTANMS…EEIGGPKEEL (64 aa)) are disordered. The span at 595–604 (LRNKQRRAQK) shows a compositional bias: basic residues. The span at 606 to 621 (AQIEEEKKNAEKEKQQ) shows a compositional bias: basic and acidic residues. Positions 612 to 629 (KKNAEKEKQQRNQKKKKD) match the Bipartite nuclear localization signal motif. A TPR 8 repeat occupies 672–705 (IETHLFAFEIYFRKEKFLLMLQSVKRAFAIDSSH). N6-acetyllysine is present on residues K735 and K756. Residues S855 and S856 each carry the phosphoserine modification.

Component of the N-terminal acetyltransferase A complex (also called the NatA complex) composed of NAA10 and NAA15. Within the complex interacts with NAA10. Component of the N-terminal acetyltransferase A (NatA)/HYPK complex at least composed of NAA10, NAA15 and HYPK, which has N-terminal acetyltransferase activity. In complex with NAA10, interacts with HYPK. Component of the N-terminal acetyltransferase E (NatE) complex at least composed of NAA10, NAA15 and NAA50. Within the complex interacts with NAA10; the interaction is required for binding to NAA50. Interacts with NAAT50. The interaction of the NatA complex with NAA50 reduces the acetylation activity of the NatA complex. Component of the N-terminal acetyltransferase E (NatE)/HYPK complex at least composed of NAA10, NAA15, NAA50 and HYPK. In complex with NAA10 interacts with HYPK; the interaction with HYPK reduces the capacity of the NatA complex to interact with NAA50. Interacts with NAA11. Interacts with XRCC6 and XRCC5. Cleaved by caspases during apoptosis, resulting in a stable 35 kDa fragment. Expressed at high levels in testis and in ocular endothelial cells. Also found in brain (corpus callosum), heart, colon, bone marrow and at lower levels in most adult tissues, including thyroid, liver, pancreas, mammary and salivary glands, lung, ovary, urogenital system and upper gastrointestinal tract. Overexpressed in gastric cancer, in papillary thyroid carcinomas and in a Burkitt lymphoma cell line (Daudi). Specifically suppressed in abnormal proliferating blood vessels in eyes of patients with proliferative diabetic retinopathy.

The protein resides in the cytoplasm. The protein localises to the nucleus. Functionally, auxillary subunit of N-terminal acetyltransferase complexes which display alpha (N-terminal) acetyltransferase (NAT) activity. The NAT activity may be important for vascular, hematopoietic and neuronal growth and development. Required to control retinal neovascularization in adult ocular endothelial cells. In complex with XRCC6 and XRCC5 (Ku80), up-regulates transcription from the osteocalcin promoter. The chain is N-alpha-acetyltransferase 15, NatA auxiliary subunit (NAA15) from Homo sapiens (Human).